The following is a 238-amino-acid chain: Probable transcriptional regulatory protein SPD_1725 (238 aa).

It belongs to the TACO1 family. YeeN subfamily.

It is found in the cytoplasm. The chain is Probable transcriptional regulatory protein SPD_1725 from Streptococcus pneumoniae serotype 2 (strain D39 / NCTC 7466).